The primary structure comprises 186 residues: Probable nicotinate-nucleotide adenylyltransferase (186 aa).

It belongs to the NadD family.

The enzyme catalyses nicotinate beta-D-ribonucleotide + ATP + H(+) = deamido-NAD(+) + diphosphate. The protein operates within cofactor biosynthesis; NAD(+) biosynthesis; deamido-NAD(+) from nicotinate D-ribonucleotide: step 1/1. Functionally, catalyzes the reversible adenylation of nicotinate mononucleotide (NaMN) to nicotinic acid adenine dinucleotide (NaAD). This chain is Probable nicotinate-nucleotide adenylyltransferase, found in Thermus thermophilus (strain ATCC 27634 / DSM 579 / HB8).